Consider the following 244-residue polypeptide: 1-(5-phosphoribosyl)-5-[(5-phosphoribosylamino)methylideneamino] imidazole-4-carboxamide isomerase (244 aa).

The Proton acceptor role is filled by Asp7. Asp129 serves as the catalytic Proton donor.

Belongs to the HisA/HisF family.

The protein localises to the cytoplasm. It catalyses the reaction 1-(5-phospho-beta-D-ribosyl)-5-[(5-phospho-beta-D-ribosylamino)methylideneamino]imidazole-4-carboxamide = 5-[(5-phospho-1-deoxy-D-ribulos-1-ylimino)methylamino]-1-(5-phospho-beta-D-ribosyl)imidazole-4-carboxamide. Its pathway is amino-acid biosynthesis; L-histidine biosynthesis; L-histidine from 5-phospho-alpha-D-ribose 1-diphosphate: step 4/9. The protein is 1-(5-phosphoribosyl)-5-[(5-phosphoribosylamino)methylideneamino] imidazole-4-carboxamide isomerase of Pseudoalteromonas atlantica (strain T6c / ATCC BAA-1087).